A 391-amino-acid polypeptide reads, in one-letter code: uncharacterized protein (391 aa).

The 96-residue stretch at 235–330 (VFILSRINLL…LYLKNETQKS (96 aa)) folds into the HTH arsR-type domain.

This is an uncharacterized protein from Methanocaldococcus jannaschii (strain ATCC 43067 / DSM 2661 / JAL-1 / JCM 10045 / NBRC 100440) (Methanococcus jannaschii).